A 270-amino-acid polypeptide reads, in one-letter code: Probable feruloyl esterase C (270 aa).

The signal sequence occupies residues methionine 1–glycine 21.

The protein belongs to the faeC family.

Its subcellular location is the secreted. It carries out the reaction feruloyl-polysaccharide + H2O = ferulate + polysaccharide.. Its function is as follows. Involved in degradation of plant cell walls. Hydrolyzes the feruloyl-arabinose ester bond in arabinoxylans, and the feruloyl-galactose ester bond in pectin. Active against paranitrophenyl-acetate, methyl ferulate and wheat arabinoxylan. This chain is Probable feruloyl esterase C (faeC), found in Aspergillus niger (strain ATCC MYA-4892 / CBS 513.88 / FGSC A1513).